Reading from the N-terminus, the 858-residue chain is MAELSEEALLSVLPTIRVPKAGDRVHKDECAFSFDTPESEGGLYICMNTFLGFGKQYVERHFNKTGQRVYLHLRRTRRPKEEDTSAGTGDPPRKKPTRLAIGVEGGFDLTEDKFEFDEDVKIVILPDYLEIARDGLGGLPDIVRDRVTSAVEALLSADSASRKQEVQAWDGEVRQVSKHAFNLKQLDNPARIPPCGWKCSKCDMRENLWLNLTDGSILCGRRYFDGSGGNNHAVEHYRETGYPLAVKLGTITPDGADVYSYDEDDMVLDPSLAEHLSHFGIDMLKMQKTDKTMTELEIDMNQRIGEWELIQESGVPLKPLFGPGYTGIRNLGNSCYLNSVVQVLFSIPDFQRKYVDKLEKIFQNAPTDPTQDFSTQVAKLGHGLLSGEYSKPALESGDGEQVPEQKEVQDGIAPRMFKALIGKGHPEFSTNRQQDAQEFFLHLINMVERNCRSSENPNEVFRFLVEEKIKCLATEKVKYTQRVDYIMQLPVPMDAALNKEELLEYEEKKRQAEEEKVPLPELVRAQVPFSSCLEAYGAPEQVDDFWSTALQAKSVAVKTTRFASFPDYLVIQIKKFTFGLDWVPKKLDVSIEMPEELDISQLRGTGLQPGEEELPDIAPPLVTPDEPKGSLGFYGNEDEDSFCSPHFSSPTSPMLDESVIIQLVEMGFPMDACRKAVYYTGNSGAEAAMNWVMSHMDDPDFANPLILPGSSGPGSTSAAADPPPEDCVTTIVSMGFSRDQALKALRATNNSLERAVDWIFSHIDDLDAEAAMDISEGRSAAESISESVPVGPKVRDGPGKYQLFAFISHMGTSTMCGHYVCHIKKEGRWVIYNDQKVCASEKPPKDLGYIYFYQRVVS.

Ala2 is subject to N-acetylalanine. The interval Leu73–Arg98 is disordered. Lys113 participates in a covalent cross-link: Glycyl lysine isopeptide (Lys-Gly) (interchain with G-Cter in SUMO). Phosphoserine occurs at positions 149 and 156. The UBP-type; degenerate zinc finger occupies Gln175–Met283. An intrachain disulfide couples Cys195 to Cys816. Residues Cys199 and Cys202 each coordinate Zn(2+). Trp209 contributes to the substrate binding site. Cys219 provides a ligand contact to Zn(2+). Arg221–Phe224 is a substrate binding site. His232 is a Zn(2+) binding site. The substrate site is built by Tyr259, Tyr261, and Asp264. A Phosphothreonine modification is found at Thr292. The 531-residue stretch at Thr326–Val856 folds into the USP domain. The Nucleophile role is filled by Cys335. The residue at position 623 (Thr623) is a Phosphothreonine. 2 consecutive UBA domains span residues Met654–His695 and Pro722–His762. 3 positions are modified to phosphoserine: Ser779, Ser783, and Ser785. The active-site Proton acceptor is His818.

The protein belongs to the peptidase C19 family. As to quaternary structure, homodimer. Interacts with TRIML1. In terms of processing, SUMOylated at Lys-113; SUMOylation affects the interaction with Cav3.2 channels. Post-translationally, ubiquitinated by SMURF1; leading to proteasomal degradation.

Its subcellular location is the cytoplasm. The protein localises to the stress granule. It localises to the nucleus. The catalysed reaction is Thiol-dependent hydrolysis of ester, thioester, amide, peptide and isopeptide bonds formed by the C-terminal Gly of ubiquitin (a 76-residue protein attached to proteins as an intracellular targeting signal).. Functionally, deubiquitinating enzyme that participates in a wide range of cellular processes by specifically cleaving isopeptide bonds between ubiquitin and substrate proteins or ubiquitin itself. Affects thereby important cellular signaling pathways such as NF-kappa-B, Wnt/beta-catenin, and cytokine production by regulating ubiquitin-dependent protein degradation. Participates in the activation of the Wnt signaling pathway by promoting FOXM1 deubiquitination and stabilization that induces the recruitment of beta-catenin to Wnt target gene promoter. Regulates the assembly and disassembly of heat-induced stress granules by mediating the hydrolysis of unanchored ubiquitin chains. Promotes lipopolysaccharide-induced apoptosis and inflammatory response by stabilizing the TXNIP protein. Affects T-cell biology by stabilizing the inhibitory receptor on T-cells PDC1. Acts as a negative regulator of autophagy by regulating ULK1 at both protein and mRNA levels. Acts also as a negative regulator of type I interferon production by simultaneously removing both 'Lys-48'-linked unanchored and 'Lys-63'-linked anchored polyubiquitin chains on the transcription factor IRF3. Modulates the stability of DNA mismatch repair protein MLH1 and counteracts the effect of the ubiquitin ligase UBR4. Upon activation by insulin, it gets phosphorylated through mTORC1-mediated phosphorylation to enhance YTHDF1 stability by removing 'Lys-11'-linked polyubiquitination. May also deubiquitinate other substrates such as the calcium channel CACNA1H. The chain is Ubiquitin carboxyl-terminal hydrolase 5 (Usp5) from Mus musculus (Mouse).